Reading from the N-terminus, the 109-residue chain is Large ribosomal subunit protein eL30 (109 aa).

This sequence belongs to the eukaryotic ribosomal protein eL30 family. Component of the large ribosomal subunit (LSU). Mature N.crassa ribosomes consist of a small (40S) and a large (60S) subunit. The 40S small subunit contains 1 molecule of ribosomal RNA (18S rRNA) and at least 32 different proteins. The large 60S subunit contains 3 rRNA molecules (26S, 5.8S and 5S rRNA) and at least 42 different proteins.

The protein resides in the cytoplasm. Functionally, component of the ribosome, a large ribonucleoprotein complex responsible for the synthesis of proteins in the cell. The small ribosomal subunit (SSU) binds messenger RNAs (mRNAs) and translates the encoded message by selecting cognate aminoacyl-transfer RNA (tRNA) molecules. The large subunit (LSU) contains the ribosomal catalytic site termed the peptidyl transferase center (PTC), which catalyzes the formation of peptide bonds, thereby polymerizing the amino acids delivered by tRNAs into a polypeptide chain. The nascent polypeptides leave the ribosome through a tunnel in the LSU and interact with protein factors that function in enzymatic processing, targeting, and the membrane insertion of nascent chains at the exit of the ribosomal tunnel. The polypeptide is Large ribosomal subunit protein eL30 (rpl-30) (Neurospora crassa (strain ATCC 24698 / 74-OR23-1A / CBS 708.71 / DSM 1257 / FGSC 987)).